We begin with the raw amino-acid sequence, 270 residues long: uncharacterized protein (270 aa).

The interval 235 to 270 (LADSDLEADSDDSESFEFVENPEPSENGSEPTIKND) is disordered. Over residues 238-251 (SDLEADSDDSESFE) the composition is skewed to acidic residues. Positions 255–270 (NPEPSENGSEPTIKND) are enriched in low complexity.

This is an uncharacterized protein from Halorubrum sp. PV6 (HRPV-1).